The primary structure comprises 361 residues: Phosphoserine aminotransferase (361 aa).

Arginine 42 is an L-glutamate binding site. Pyridoxal 5'-phosphate is bound by residues 76–77 (AS), tryptophan 102, threonine 152, aspartate 172, and glutamine 195. Lysine 196 is modified (N6-(pyridoxal phosphate)lysine). 237–238 (NT) is a binding site for pyridoxal 5'-phosphate.

This sequence belongs to the class-V pyridoxal-phosphate-dependent aminotransferase family. SerC subfamily. Homodimer. Pyridoxal 5'-phosphate is required as a cofactor.

It localises to the cytoplasm. It catalyses the reaction O-phospho-L-serine + 2-oxoglutarate = 3-phosphooxypyruvate + L-glutamate. The enzyme catalyses 4-(phosphooxy)-L-threonine + 2-oxoglutarate = (R)-3-hydroxy-2-oxo-4-phosphooxybutanoate + L-glutamate. It functions in the pathway amino-acid biosynthesis; L-serine biosynthesis; L-serine from 3-phospho-D-glycerate: step 2/3. Its function is as follows. Catalyzes the reversible conversion of 3-phosphohydroxypyruvate to phosphoserine and of 3-hydroxy-2-oxo-4-phosphonooxybutanoate to phosphohydroxythreonine. This Halalkalibacterium halodurans (strain ATCC BAA-125 / DSM 18197 / FERM 7344 / JCM 9153 / C-125) (Bacillus halodurans) protein is Phosphoserine aminotransferase.